Here is an 831-residue protein sequence, read N- to C-terminus: Prickle-like protein 1 (831 aa).

Positions 14–122 (FGCQRSSTSD…TIKLLSRAMM (109 aa)) constitute a PET domain. LIM zinc-binding domains follow at residues 124-189 (AVCE…LLKP), 189-249 (PRCS…LYAE), and 249-313 (EYCE…EDIH). The disordered stretch occupies residues 314–346 (ASDSSDSAFQSARSRDSRRSVRMGRSSRSADQC). Serine 315, serine 591, and serine 594 each carry phosphoserine. 2 disordered regions span residues 664 to 688 (EERGSRPHHHRHRRSRKSRSDNALN) and 763 to 831 (CSSS…CIIS). Over residues 669-680 (RPHHHRHRRSRK) the composition is skewed to basic residues. Serine 683 carries the post-translational modification Phosphoserine. The span at 797-812 (DLSSPASALPTPQFNQ) shows a compositional bias: polar residues. Over residues 815–831 (TKSKKKKGHRGKNCIIS) the composition is skewed to basic residues. Position 828 is a cysteine methyl ester (cysteine 828). Cysteine 828 carries the S-farnesyl cysteine lipid modification. The propeptide at 829–831 (IIS) is removed in mature form.

This sequence belongs to the prickle / espinas / testin family. In terms of assembly, interacts with REST.

Its subcellular location is the nucleus membrane. The protein resides in the cytoplasm. It localises to the cytosol. Functionally, involved in the planar cell polarity pathway that controls convergent extension during gastrulation and neural tube closure. Convergent extension is a complex morphogenetic process during which cells elongate, move mediolaterally, and intercalate between neighboring cells, leading to convergence toward the mediolateral axis and extension along the anteroposterior axis. Necessary for nuclear localization of REST. May serve as nuclear receptor. The protein is Prickle-like protein 1 (Prickle1) of Rattus norvegicus (Rat).